Consider the following 328-residue polypeptide: Phosphate acetyltransferase (328 aa).

The protein belongs to the phosphate acetyltransferase and butyryltransferase family.

The protein resides in the cytoplasm. It carries out the reaction acetyl-CoA + phosphate = acetyl phosphate + CoA. The protein operates within metabolic intermediate biosynthesis; acetyl-CoA biosynthesis; acetyl-CoA from acetate: step 2/2. In Staphylococcus aureus (strain COL), this protein is Phosphate acetyltransferase (pta).